The following is a 343-amino-acid chain: Nicotianamine synthase 3 (343 aa).

The protein belongs to the nicotianamine synthase (NAS)-like family. In terms of tissue distribution, expressed in leaves.

The catalysed reaction is 3 S-adenosyl-L-methionine = nicotianamine + 3 S-methyl-5'-thioadenosine + 3 H(+). Functionally, synthesizes nicotianamine, a polyamine that is the first intermediate in the synthesis of the phytosiderophores of the mugineic acid type found in gramineae which serve as a sensor for the physiological iron status within the plant, and/or might be involved in the transport of iron. The protein is Nicotianamine synthase 3 (NAS3) of Oryza sativa subsp. indica (Rice).